Reading from the N-terminus, the 431-residue chain is MGSEQDQRKRWGGCLGVFSCFKSQKGGKRIVPASRIPEGGNVSASQPNGAHQAGVLNNQAAGGINLSLLAPPSSPASFTNSALPSTTQSPNCYLSLAANSPGGPSSSMYATGPYAHETQLVSPPVFSTFTTEPSTAPFTPPPELARLTAPSSPDVPYARFLTSSMDLKNSGKGHYNDLQATYSLYPGSPASALRSPISRASGDGLLSPQNGKCSRSDSGNTFGYDTNGVSTPLQESNFFCPETFAKFYLDHDPSVPQNGGRLSVSKDSDVYPTNGYGNGNQNRQNRSPKQDMEELEAYRASFGFSADEIITTSQYVEITDVMDGSFNTSAYSPSDGQKLLRREANLLSQTSPKSEADLDSQVVDFQSPKSSNSYKDHKQRNRIHADEEALLSRVGSVKGSRSYHISSSDAEVEYRRGRSLRESRENRHRKA.

Disordered regions lie at residues 31–55, 257–291, and 365–431; these read VPASRIPEGGNVSASQPNGAHQAGV, QNGGRLSVSKDSDVYPTNGYGNGNQNRQNRSPKQD, and FQSP…HRKA. A compositionally biased stretch (polar residues) spans 42–55; that stretch reads VSASQPNGAHQAGV. The segment covering 412–425 has biased composition (basic and acidic residues); it reads VEYRRGRSLRESRE.

This is an uncharacterized protein from Arabidopsis thaliana (Mouse-ear cress).